A 968-amino-acid chain; its full sequence is RNA polymerase-associated protein RapA (968 aa).

The Helicase ATP-binding domain maps to Asp-164–Asn-334. Asp-177–Thr-184 is a binding site for ATP. The DEAH box signature appears at Asp-280 to His-283. The Helicase C-terminal domain occupies Arg-490–Gly-662.

Belongs to the SNF2/RAD54 helicase family. RapA subfamily. As to quaternary structure, interacts with the RNAP. Has a higher affinity for the core RNAP than for the holoenzyme. Its ATPase activity is stimulated by binding to RNAP.

In terms of biological role, transcription regulator that activates transcription by stimulating RNA polymerase (RNAP) recycling in case of stress conditions such as supercoiled DNA or high salt concentrations. Probably acts by releasing the RNAP, when it is trapped or immobilized on tightly supercoiled DNA. Does not activate transcription on linear DNA. Probably not involved in DNA repair. The polypeptide is RNA polymerase-associated protein RapA (Shigella boydii serotype 18 (strain CDC 3083-94 / BS512)).